Consider the following 320-residue polypeptide: tRNA dimethylallyltransferase (320 aa).

Residue 16-23 participates in ATP binding; it reads GPTASGKT. 18–23 provides a ligand contact to substrate; sequence TASGKT. 3 interaction with substrate tRNA regions span residues 41-44, 165-169, and 247-252; these read DSAL, QRIQR, and RCVGYR.

Belongs to the IPP transferase family. Monomer. The cofactor is Mg(2+).

The catalysed reaction is adenosine(37) in tRNA + dimethylallyl diphosphate = N(6)-dimethylallyladenosine(37) in tRNA + diphosphate. Its function is as follows. Catalyzes the transfer of a dimethylallyl group onto the adenine at position 37 in tRNAs that read codons beginning with uridine, leading to the formation of N6-(dimethylallyl)adenosine (i(6)A). This chain is tRNA dimethylallyltransferase, found in Azoarcus sp. (strain BH72).